The primary structure comprises 154 residues: Myoglobin (154 aa).

Residues 2–148 (GLSDQEWQQV…FRNDMASKYK (147 aa)) form the Globin domain. H65 lines the nitrite pocket. H65 contacts O2. H94 contributes to the heme b binding site.

This sequence belongs to the globin family. As to quaternary structure, monomeric.

The protein localises to the cytoplasm. The protein resides in the sarcoplasm. The enzyme catalyses Fe(III)-heme b-[protein] + nitric oxide + H2O = Fe(II)-heme b-[protein] + nitrite + 2 H(+). It carries out the reaction H2O2 + AH2 = A + 2 H2O. Its function is as follows. Monomeric heme protein which primary function is to store oxygen and facilitate its diffusion within muscle tissues. Reversibly binds oxygen through a pentacoordinated heme iron and enables its timely and efficient release as needed during periods of heightened demand. Depending on the oxidative conditions of tissues and cells, and in addition to its ability to bind oxygen, it also has a nitrite reductase activity whereby it regulates the production of bioactive nitric oxide. Under stress conditions, like hypoxia and anoxia, it also protects cells against reactive oxygen species thanks to its pseudoperoxidase activity. This chain is Myoglobin (MB), found in Gallus gallus (Chicken).